We begin with the raw amino-acid sequence, 336 residues long: UPF0324 membrane protein BR0028/BS1330_I0028 (336 aa).

A run of 11 helical transmembrane segments spans residues 9–26, 36–55, 68–90, 94–116, 128–150, 160–182, 189–211, 221–240, 247–269, 279–301, and 313–335; these read ILPGLGLSVAITAAAMVL, RAWLEALVIAILLGTAVRSL, FSAKLLLEIAVALLGASISASAV, GSGLIFGIAAVVAVAITLSYGIG, LVACGNSICGNSAIAAMAPVIGA, AFTAILGVIVVLTLPLLVPLLGL, ILAGLTVYAVPQVLAATAPVSLL, LVRVLMLGPVILVFALISGN, PGFFQLVPWFIIGFLAMMALHSL, AIQYASMLLTIISMAALGLGVDI, and LTAILSLIALCCISLGLIHMLGV.

This sequence belongs to the UPF0324 family.

It is found in the cell membrane. In Brucella suis biovar 1 (strain 1330), this protein is UPF0324 membrane protein BR0028/BS1330_I0028.